The chain runs to 509 residues: Maturase K (509 aa).

Belongs to the intron maturase 2 family. MatK subfamily.

The protein resides in the plastid. Its subcellular location is the chloroplast. Usually encoded in the trnK tRNA gene intron. Probably assists in splicing its own and other chloroplast group II introns. This Thuja occidentalis (Northern white-cedar) protein is Maturase K.